The primary structure comprises 144 residues: UPF0735 ACT domain-containing protein LCABL_12100 (144 aa).

An ACT domain is found at Val68–Val143.

It belongs to the UPF0735 family.

The sequence is that of UPF0735 ACT domain-containing protein LCABL_12100 from Lacticaseibacillus casei (strain BL23) (Lactobacillus casei).